A 300-amino-acid chain; its full sequence is Glycine--tRNA ligase alpha subunit (300 aa).

This sequence belongs to the class-II aminoacyl-tRNA synthetase family. In terms of assembly, tetramer of two alpha and two beta subunits.

Its subcellular location is the cytoplasm. The enzyme catalyses tRNA(Gly) + glycine + ATP = glycyl-tRNA(Gly) + AMP + diphosphate. This Pseudoalteromonas translucida (strain TAC 125) protein is Glycine--tRNA ligase alpha subunit.